The chain runs to 699 residues: eEF1A lysine and N-terminal methyltransferase (699 aa).

Position 1 is an N-acetylmethionine (Met1). Ser267 is subject to Phosphoserine. Residues 433–459 (VSHKAQKKRKKDRKKQRPADAEDLPAA) are disordered. Over residues 436–448 (KAQKKRKKDRKKQ) the composition is skewed to basic residues.

This sequence belongs to the methyltransferase superfamily. In terms of assembly, forms a tripartite complex containing GAB1, METTL13 and SPRY2. Within the complex interacts with GAB1 and SPRY2.

Its subcellular location is the cytoplasm. The protein resides in the nucleus. The protein localises to the mitochondrion. It carries out the reaction L-lysyl-[protein] + S-adenosyl-L-methionine = N(6)-methyl-L-lysyl-[protein] + S-adenosyl-L-homocysteine + H(+). It catalyses the reaction N(6)-methyl-L-lysyl-[protein] + S-adenosyl-L-methionine = N(6),N(6)-dimethyl-L-lysyl-[protein] + S-adenosyl-L-homocysteine + H(+). The enzyme catalyses N-terminal glycyl-L-lysyl-L-glutamyl-[protein] + 3 S-adenosyl-L-methionine = N-terminal N,N,N-trimethyl-glycyl-L-lysyl-L-glutamyl-[protein] + 3 S-adenosyl-L-homocysteine + 3 H(+). With respect to regulation, protein N-terminal methyltransferase activity is inhibited by GTP and GDP. Dual methyltransferase that catalyzes methylation of elongation factor 1-alpha (EEF1A1 and EEF1A2) at two different positions, and is therefore involved in the regulation of mRNA translation. Via its C-terminus, methylates EEF1A1 and EEF1A2 at the N-terminal residue 'Gly-2'. Via its N-terminus dimethylates EEF1A1 and EEF1A2 at residue 'Lys-55'. Has no activity towards core histones H2A, H2B, H3 and H4. This chain is eEF1A lysine and N-terminal methyltransferase, found in Homo sapiens (Human).